A 176-amino-acid polypeptide reads, in one-letter code: Large ribosomal subunit protein eL6A (176 aa).

Serine 2 is modified (N-acetylserine). A Phosphoserine modification is found at serine 12. A Glycyl lysine isopeptide (Lys-Gly) (interchain with G-Cter in ubiquitin) cross-link involves residue lysine 128.

This sequence belongs to the eukaryotic ribosomal protein eL6 family. Component of the large ribosomal subunit (LSU). Mature yeast ribosomes consist of a small (40S) and a large (60S) subunit. The 40S small subunit contains 1 molecule of ribosomal RNA (18S rRNA) and 33 different proteins (encoded by 57 genes). The large 60S subunit contains 3 rRNA molecules (25S, 5.8S and 5S rRNA) and 46 different proteins (encoded by 81 genes). Post-translationally, N-terminally acetylated by acetyltransferase NatA.

It localises to the cytoplasm. Functionally, component of the ribosome, a large ribonucleoprotein complex responsible for the synthesis of proteins in the cell. The small ribosomal subunit (SSU) binds messenger RNAs (mRNAs) and translates the encoded message by selecting cognate aminoacyl-transfer RNA (tRNA) molecules. The large subunit (LSU) contains the ribosomal catalytic site termed the peptidyl transferase center (PTC), which catalyzes the formation of peptide bonds, thereby polymerizing the amino acids delivered by tRNAs into a polypeptide chain. The nascent polypeptides leave the ribosome through a tunnel in the LSU and interact with protein factors that function in enzymatic processing, targeting, and the membrane insertion of nascent chains at the exit of the ribosomal tunnel. This chain is Large ribosomal subunit protein eL6A, found in Saccharomyces cerevisiae (strain ATCC 204508 / S288c) (Baker's yeast).